We begin with the raw amino-acid sequence, 617 residues long: Isopropyl malate synthase gloH (617 aa).

Residues 47–325 (PIWLSTDLRD…ETGLDFSDLL (279 aa)) form the Pyruvate carboxyltransferase domain.

Belongs to the alpha-IPM synthase/homocitrate synthase family. LeuA type 2 subfamily.

It catalyses the reaction 3-methyl-2-oxobutanoate + acetyl-CoA + H2O = (2S)-2-isopropylmalate + CoA + H(+). It participates in mycotoxin biosynthesis. Its function is as follows. 2-isopropylmalate synthase; part of the gene cluster that mediates the biosynthesis of pneumocandins, lipohexapeptides of the echinocandin family that prevent fungal cell wall formation by non-competitive inhibition of beta-1,3-glucan synthase. The 10,12-dimethylmyristoyl side chain is synthesized by the reducing polyketide synthase gloL/GLPKS4. The thioesterase gloN/GLHYD exclusively interacts with gloL/GLPKS4 to maintain turnover of the polyketide side chain. The 10R,12S-dimethylmyristic acid is then transferred to the first thiolation domain of the nonribosomal peptide synthetase gloA/GLNRPS4 by the acyl-AMP ligase gloD/GLligase, followed by its acylation to L-ornithine to trigger elongation of the cyclic hexapeptide. L-ornithine, 4R-hydroxyl-L-proline (generated from L-proline by the dioxygenase gloF/GLOXY2), 3S-hydroxyl-L-homotyrosine (generated by gloG/GLHtyB, gloH/GLHtyA, gloI/GLHtyC, gloJ/GLHtyD and hydroxylated at C-3 by the dioxygenase gloM/GLOXY1), 3R-hydroxyl-L-glutamine (generated from L-glutamine probably by the dioxygenase gloE/GLOXY3) and 3S-hydroxyl-L-proline (generated from L-proline by the dioxygenase gloF/GLOXY2 to yield pneumocandin B0), or 3S-hydroxyl-4S-methyl-L-proline (generated from L-leucine by the dioxygenase gloC/GLOXY4 to yield pneumocandin A0) are sequentially added to the growing chain. The last C domain of gloA/GLNRPS4 is proposed to be responsible for cyclization by condensation to form the peptide bond between L-ornithine and 3S-hydroxyl-4S-methyl-L-proline (for pneumocandin A0) or 3S-hydroxyl-L-proline (for pneumocandin B0). Finally, the subsequent C-4 hydroxylation of 3S-hydroxyl-L-homotyrosine and L-ornithine dihydroxylation at C-4 and C-5 are performed by the cytochrome P450 monooxygenases gloP/GLP450-1 and gloO/GLP450-2, respectively. This is Isopropyl malate synthase gloH from Glarea lozoyensis (strain ATCC 20868 / MF5171).